Reading from the N-terminus, the 648-residue chain is Macrolide export ATP-binding/permease protein MacB (648 aa).

The ABC transporter domain maps to 5–243; sequence LELCNVSRSY…QGVDAAVVNT (239 aa). 41–48 contributes to the ATP binding site; sequence GVSGSGKS. The next 5 membrane-spanning stretches (helical) occupy residues 273-293, 417-437, 523-543, 577-597, and 611-631; these read LLTMLGIIIGIASVVSIVVVG, ANVVGEVVLAGNMPVIVIGVA, LFLTLVAVISLVVGGIGVMNI, VLVCLVGGALGISLSMFIAFM, and LTALASAFLCSTFTGILFGWL.

Belongs to the ABC transporter superfamily. Macrolide exporter (TC 3.A.1.122) family. As to quaternary structure, homodimer. Part of the tripartite efflux system MacAB-TolC, which is composed of an inner membrane transporter, MacB, a periplasmic membrane fusion protein, MacA, and an outer membrane component, TolC. The complex forms a large protein conduit and can translocate molecules across both the inner and outer membranes. Interacts with MacA.

The protein resides in the cell inner membrane. Its function is as follows. Part of the tripartite efflux system MacAB-TolC. MacB is a non-canonical ABC transporter that contains transmembrane domains (TMD), which form a pore in the inner membrane, and an ATP-binding domain (NBD), which is responsible for energy generation. Confers resistance against macrolides. In Salmonella typhimurium (strain LT2 / SGSC1412 / ATCC 700720), this protein is Macrolide export ATP-binding/permease protein MacB.